A 129-amino-acid chain; its full sequence is Glycine cleavage system H protein (129 aa).

Positions 24–106 (LLKIGVSEFA…IGEGWLVILK (83 aa)) constitute a Lipoyl-binding domain. K65 is modified (N6-lipoyllysine).

This sequence belongs to the GcvH family. As to quaternary structure, the glycine cleavage system is composed of four proteins: P, T, L and H. Requires (R)-lipoate as cofactor.

Its function is as follows. The glycine cleavage system catalyzes the degradation of glycine. The H protein shuttles the methylamine group of glycine from the P protein to the T protein. The chain is Glycine cleavage system H protein from Prochlorococcus marinus (strain AS9601).